We begin with the raw amino-acid sequence, 225 residues long: Pyridoxine/pyridoxamine 5'-phosphate oxidase (225 aa).

Substrate is bound by residues 9-12 (RVDY) and Lys78. FMN contacts are provided by residues 73 to 78 (RTVLCK), 88 to 89 (YT), Lys95, and Gln117. Residues Tyr135, Arg139, and Ser143 each contribute to the substrate site. Residues 152–153 (QS) and Trp198 each bind FMN. 204-206 (RLH) serves as a coordination point for substrate. Arg208 contacts FMN.

It belongs to the pyridoxamine 5'-phosphate oxidase family. As to quaternary structure, homodimer. It depends on FMN as a cofactor.

It catalyses the reaction pyridoxamine 5'-phosphate + O2 + H2O = pyridoxal 5'-phosphate + H2O2 + NH4(+). The enzyme catalyses pyridoxine 5'-phosphate + O2 = pyridoxal 5'-phosphate + H2O2. It participates in cofactor metabolism; pyridoxal 5'-phosphate salvage; pyridoxal 5'-phosphate from pyridoxamine 5'-phosphate: step 1/1. The protein operates within cofactor metabolism; pyridoxal 5'-phosphate salvage; pyridoxal 5'-phosphate from pyridoxine 5'-phosphate: step 1/1. In terms of biological role, catalyzes the oxidation of either pyridoxine 5'-phosphate (PNP) or pyridoxamine 5'-phosphate (PMP) into pyridoxal 5'-phosphate (PLP). In Nocardia farcinica (strain IFM 10152), this protein is Pyridoxine/pyridoxamine 5'-phosphate oxidase.